The chain runs to 183 residues: Ferritin heavy chain (183 aa).

Met1 carries the N-acetylmethionine modification. The residue at position 2 (Thr2) is an N-acetylthreonine; in Ferritin heavy chain, N-terminally processed. The Ferritin-like diiron domain maps to 11–160 (QNYHQDSEAA…DHVTNLRKMG (150 aa)). Fe cation is bound by residues Glu28, Glu63, His66, Glu108, and Gln142. 2 positions are modified to phosphoserine: Ser179 and Ser183.

Belongs to the ferritin family. As to quaternary structure, oligomer of 24 subunits. There are two types of subunits: L (light) chain and H (heavy) chain. The major chain can be light or heavy, depending on the species and tissue type. In the human liver, the heavy chain is predominant. The functional molecule forms a roughly spherical shell with a diameter of 12 nm and contains a central cavity into which the insoluble mineral iron core is deposited. Interacts with NCOA4; NCOA4 promotes targeting of the iron-binding ferritin complex to autolysosomes following starvation or iron depletion. Expressed in the liver.

The protein localises to the cytoplasm. It localises to the lysosome. Its subcellular location is the cytoplasmic vesicle. The protein resides in the autophagosome. It catalyses the reaction 4 Fe(2+) + O2 + 4 H(+) = 4 Fe(3+) + 2 H2O. In terms of biological role, stores iron in a soluble, non-toxic, readily available form. Important for iron homeostasis. Has ferroxidase activity. Iron is taken up in the ferrous form and deposited as ferric hydroxides after oxidation. Also plays a role in delivery of iron to cells. Mediates iron uptake in capsule cells of the developing kidney. Delivery to lysosomes is mediated by the cargo receptor NCOA4 for autophagic degradation and release of iron. The protein is Ferritin heavy chain (FTH1) of Homo sapiens (Human).